A 218-amino-acid polypeptide reads, in one-letter code: Protein-L-isoaspartate O-methyltransferase 1 (218 aa).

Ser-69 is a catalytic residue.

It belongs to the methyltransferase superfamily. L-isoaspartyl/D-aspartyl protein methyltransferase family.

It is found in the cytoplasm. The enzyme catalyses [protein]-L-isoaspartate + S-adenosyl-L-methionine = [protein]-L-isoaspartate alpha-methyl ester + S-adenosyl-L-homocysteine. Its function is as follows. Catalyzes the methyl esterification of L-isoaspartyl residues in peptides and proteins that result from spontaneous decomposition of normal L-aspartyl and L-asparaginyl residues. It plays a role in the repair and/or degradation of damaged proteins. The chain is Protein-L-isoaspartate O-methyltransferase 1 from Marinobacter nauticus (strain ATCC 700491 / DSM 11845 / VT8) (Marinobacter aquaeolei).